A 446-amino-acid polypeptide reads, in one-letter code: Ribosomal protein uS12 methylthiotransferase RimO (446 aa).

The region spanning 7–118 (PKIAFAHLGC…IVEVIERVER (112 aa)) is the MTTase N-terminal domain. Positions 16, 52, 81, 156, 160, and 163 each coordinate [4Fe-4S] cluster. The Radical SAM core domain occupies 142–371 (TTPAPVAYLR…MELQQPIAQR (230 aa)). The region spanning 374 to 440 (AAEVGKIVPV…IYDLYGIIPA (67 aa)) is the TRAM domain.

It belongs to the methylthiotransferase family. RimO subfamily. Requires [4Fe-4S] cluster as cofactor.

The protein resides in the cytoplasm. It catalyses the reaction L-aspartate(89)-[ribosomal protein uS12]-hydrogen + (sulfur carrier)-SH + AH2 + 2 S-adenosyl-L-methionine = 3-methylsulfanyl-L-aspartate(89)-[ribosomal protein uS12]-hydrogen + (sulfur carrier)-H + 5'-deoxyadenosine + L-methionine + A + S-adenosyl-L-homocysteine + 2 H(+). Catalyzes the methylthiolation of an aspartic acid residue of ribosomal protein uS12. The chain is Ribosomal protein uS12 methylthiotransferase RimO from Thermosynechococcus vestitus (strain NIES-2133 / IAM M-273 / BP-1).